Consider the following 58-residue polypeptide: Photosystem II reaction center protein K (58 aa).

Residues 1-21 (MLVISNVYPSNLFTLINPFFA) constitute a propeptide that is removed on maturation. The chain crosses the membrane as a helical span at residues 29 to 49 (IFDPIVDVMPIIPVFFFLLAF).

This sequence belongs to the PsbK family. PSII is composed of 1 copy each of membrane proteins PsbA, PsbB, PsbC, PsbD, PsbE, PsbF, PsbH, PsbI, PsbJ, PsbK, PsbL, PsbM, PsbT, PsbX, PsbY, PsbZ, Psb30/Ycf12, at least 3 peripheral proteins of the oxygen-evolving complex and a large number of cofactors. It forms dimeric complexes.

The protein resides in the plastid. It localises to the chloroplast thylakoid membrane. Its function is as follows. One of the components of the core complex of photosystem II (PSII). PSII is a light-driven water:plastoquinone oxidoreductase that uses light energy to abstract electrons from H(2)O, generating O(2) and a proton gradient subsequently used for ATP formation. It consists of a core antenna complex that captures photons, and an electron transfer chain that converts photonic excitation into a charge separation. The chain is Photosystem II reaction center protein K from Psilotum nudum (Whisk fern).